The following is a 139-amino-acid chain: D-ribose pyranase (139 aa).

Residue His20 is the Proton donor of the active site. Residues Asp28, His106, and 128–130 (YAN) each bind substrate.

This sequence belongs to the RbsD / FucU family. RbsD subfamily. Homodecamer.

It localises to the cytoplasm. The catalysed reaction is beta-D-ribopyranose = beta-D-ribofuranose. Its pathway is carbohydrate metabolism; D-ribose degradation; D-ribose 5-phosphate from beta-D-ribopyranose: step 1/2. In terms of biological role, catalyzes the interconversion of beta-pyran and beta-furan forms of D-ribose. This Proteus mirabilis (strain HI4320) protein is D-ribose pyranase.